A 432-amino-acid polypeptide reads, in one-letter code: MAAPVGAQARKLLRDLVLRPPLLAARSQVVQLTSRRWLNLQEYQSKKLMSDNGVKVQRFFVADTANEALEAAKRLNAKEIVLKAQILAGGRGKGVFSSGLKGGVHLTKDPKVVGQLAKQMIGYNLATKQTPKEGVKVKKVMVAEALDISRETYLAILMDRSCNGPVLVGSPQGGVDIEEVAASNPELIFKEQIDIIEGIKDSQAQRMAENLGFLGPLKNQAADQIKKLYNLFLKIDATQVEVNPFGETPEGQVVCFDAKINFDDNAEFRQKDIFAMDDKSENEPIENEAARYDLKYIGLDGNIACFVNGAGLAMATCDIIFLNGGKPANFLDLGGGVKESQVYQAFKLLTADPKVEAILVNIFGGIVNCAIIANGITKACRELELKVPLVVRLEGTNVHEAQNILSNSGLPITSAVDLEDAAKKAVASVAKK.

A mitochondrion-targeting transit peptide spans 1 to 37 (MAAPVGAQARKLLRDLVLRPPLLAARSQVVQLTSRRW). In terms of domain architecture, ATP-grasp spans 46 to 274 (KKLMSDNGVK…NAEFRQKDIF (229 aa)). Position 57 (Q57) interacts with GTP. K73 is subject to N6-acetyllysine. Residue K78 is modified to N6-succinyllysine. A GTP-binding site is contributed by 90–92 (GRG). 3 positions are modified to N6-acetyllysine: K111, K132, and K139. L146 lines the GTP pocket. A Phosphoserine modification is found at S161. An N6-acetyllysine mark is found at K200, K218, and K227. N243 and D257 together coordinate Mg(2+). K271 carries the post-translational modification N6-acetyllysine. Residue N308 participates in substrate binding. K338 is subject to N6-succinyllysine. An N6-acetyllysine modification is found at K347. 365–367 (GIV) provides a ligand contact to substrate. N6-acetyllysine is present on residues K386 and K423.

This sequence belongs to the succinate/malate CoA ligase beta subunit family. GTP-specific subunit beta subfamily. Heterodimer of an alpha and a beta subunit. The beta subunit determines specificity for GTP. It depends on Mg(2+) as a cofactor.

Its subcellular location is the mitochondrion. The catalysed reaction is GTP + succinate + CoA = succinyl-CoA + GDP + phosphate. Its pathway is carbohydrate metabolism; tricarboxylic acid cycle; succinate from succinyl-CoA (ligase route): step 1/1. GTP-specific succinyl-CoA synthetase functions in the citric acid cycle (TCA), coupling the hydrolysis of succinyl-CoA to the synthesis of GTP and thus represents the only step of substrate-level phosphorylation in the TCA. The beta subunit provides nucleotide specificity of the enzyme and binds the substrate succinate, while the binding sites for coenzyme A and phosphate are found in the alpha subunit. The polypeptide is Succinate--CoA ligase [GDP-forming] subunit beta, mitochondrial (Bos taurus (Bovine)).